We begin with the raw amino-acid sequence, 313 residues long: Porphobilinogen deaminase (313 aa).

Residue Cys242 is modified to S-(dipyrrolylmethanemethyl)cysteine.

It belongs to the HMBS family. Monomer. Dipyrromethane is required as a cofactor.

The enzyme catalyses 4 porphobilinogen + H2O = hydroxymethylbilane + 4 NH4(+). It functions in the pathway porphyrin-containing compound metabolism; protoporphyrin-IX biosynthesis; coproporphyrinogen-III from 5-aminolevulinate: step 2/4. Tetrapolymerization of the monopyrrole PBG into the hydroxymethylbilane pre-uroporphyrinogen in several discrete steps. In Pseudomonas fluorescens (strain ATCC BAA-477 / NRRL B-23932 / Pf-5), this protein is Porphobilinogen deaminase.